The following is a 147-amino-acid chain: MALQRTHSLLLLLLLTLLGLGLVQPSYGQDGMYQRFLRQHVHPEETGGNDRYCNLMMQRRKMTLYHCKRFNTFIHEDIWNIRSICSTTNIQCKNGKTNCHEGVVKVTDCRDTGSSRAPNCRYRAMASTRRVVIACEGNPQVPVHFDG.

An N-terminal signal peptide occupies residues 1–28 (MALQRTHSLLLLLLLTLLGLGLVQPSYG). Pyrrolidone carboxylic acid is present on Gln-29. DUMP contacts are provided by Arg-35, His-40, Lys-68, Asn-71, and Thr-72. His-40 (proton acceptor) is an active-site residue. Intrachain disulfides connect Cys-53–Cys-109, Cys-67–Cys-120, Cys-85–Cys-135, and Cys-92–Cys-99. His-144 acts as the Proton donor in catalysis. Phe-145 contributes to the dUMP binding site.

It belongs to the pancreatic ribonuclease family.

It localises to the secreted. Its function is as follows. Cleaves preferentially after uridine bases. Has antimicrobial activity against uropathogenic E.coli (UPEC). Probably contributes to urinary tract sterility. This Pongo abelii (Sumatran orangutan) protein is Ribonuclease 4 (RNASE4).